Here is a 176-residue protein sequence, read N- to C-terminus: Endoribonuclease YbeY (176 aa).

Positions 128, 132, and 138 each coordinate Zn(2+).

It belongs to the endoribonuclease YbeY family. The cofactor is Zn(2+).

The protein resides in the cytoplasm. Single strand-specific metallo-endoribonuclease involved in late-stage 70S ribosome quality control and in maturation of the 3' terminus of the 16S rRNA. This is Endoribonuclease YbeY from Zymomonas mobilis subsp. mobilis (strain ATCC 31821 / ZM4 / CP4).